A 475-amino-acid polypeptide reads, in one-letter code: Glutamate--tRNA ligase (475 aa).

A 'HIGH' region motif is present at residues 9 to 19 (PSPTGYLHVGG). Positions 240–244 (KLSKR) match the 'KMSKS' region motif. Lys-243 contributes to the ATP binding site.

The protein belongs to the class-I aminoacyl-tRNA synthetase family. Glutamate--tRNA ligase type 1 subfamily. In terms of assembly, monomer.

It localises to the cytoplasm. The enzyme catalyses tRNA(Glu) + L-glutamate + ATP = L-glutamyl-tRNA(Glu) + AMP + diphosphate. Its function is as follows. Catalyzes the attachment of glutamate to tRNA(Glu) in a two-step reaction: glutamate is first activated by ATP to form Glu-AMP and then transferred to the acceptor end of tRNA(Glu). This Vibrio campbellii (strain ATCC BAA-1116) protein is Glutamate--tRNA ligase.